The primary structure comprises 64 residues: DNA gyrase inhibitor YacG (64 aa).

Zn(2+) is bound by residues C9, C12, C28, and C32. Positions 45 to 64 are disordered; it reads NAIAGAPDMSDSDGWSEDQY. Acidic residues predominate over residues 54–64; it reads SDSDGWSEDQY.

The protein belongs to the DNA gyrase inhibitor YacG family. As to quaternary structure, interacts with GyrB. Requires Zn(2+) as cofactor.

Functionally, inhibits all the catalytic activities of DNA gyrase by preventing its interaction with DNA. Acts by binding directly to the C-terminal domain of GyrB, which probably disrupts DNA binding by the gyrase. This is DNA gyrase inhibitor YacG from Vibrio parahaemolyticus serotype O3:K6 (strain RIMD 2210633).